Consider the following 276-residue polypeptide: Dermonecrotic toxin LlSicTox-alphaIV2iv (276 aa).

His-5 is a catalytic residue. Glu-25 and Asp-27 together coordinate Mg(2+). The active-site Nucleophile is His-41. Intrachain disulfides connect Cys-45–Cys-51 and Cys-47–Cys-193. Residue Asp-85 coordinates Mg(2+).

It belongs to the arthropod phospholipase D family. Class II subfamily. Requires Mg(2+) as cofactor. Expressed by the venom gland.

The protein localises to the secreted. It catalyses the reaction an N-(acyl)-sphingosylphosphocholine = an N-(acyl)-sphingosyl-1,3-cyclic phosphate + choline. The enzyme catalyses an N-(acyl)-sphingosylphosphoethanolamine = an N-(acyl)-sphingosyl-1,3-cyclic phosphate + ethanolamine. The catalysed reaction is a 1-acyl-sn-glycero-3-phosphocholine = a 1-acyl-sn-glycero-2,3-cyclic phosphate + choline. It carries out the reaction a 1-acyl-sn-glycero-3-phosphoethanolamine = a 1-acyl-sn-glycero-2,3-cyclic phosphate + ethanolamine. In terms of biological role, dermonecrotic toxins cleave the phosphodiester linkage between the phosphate and headgroup of certain phospholipids (sphingolipid and lysolipid substrates), forming an alcohol (often choline) and a cyclic phosphate. This toxin acts on sphingomyelin (SM). It may also act on ceramide phosphoethanolamine (CPE), lysophosphatidylcholine (LPC) and lysophosphatidylethanolamine (LPE), but not on lysophosphatidylserine (LPS), and lysophosphatidylglycerol (LPG). It acts by transphosphatidylation, releasing exclusively cyclic phosphate products as second products. Induces dermonecrosis, hemolysis, increased vascular permeability, edema, inflammatory response, and platelet aggregation. The chain is Dermonecrotic toxin LlSicTox-alphaIV2iv from Loxosceles laeta (South American recluse spider).